Here is a 322-residue protein sequence, read N- to C-terminus: tRNA dimethylallyltransferase (322 aa).

21-28 is an ATP binding site; the sequence is GQTAVGKT. A substrate-binding site is contributed by 23-28; that stretch reads TAVGKT. The interval 46–49 is interaction with substrate tRNA; that stretch reads DSGC.

Belongs to the IPP transferase family. Monomer. Mg(2+) serves as cofactor.

The enzyme catalyses adenosine(37) in tRNA + dimethylallyl diphosphate = N(6)-dimethylallyladenosine(37) in tRNA + diphosphate. In terms of biological role, catalyzes the transfer of a dimethylallyl group onto the adenine at position 37 in tRNAs that read codons beginning with uridine, leading to the formation of N6-(dimethylallyl)adenosine (i(6)A). The chain is tRNA dimethylallyltransferase from Wigglesworthia glossinidia brevipalpis.